The primary structure comprises 198 residues: Peptidyl-tRNA hydrolase (198 aa).

A tRNA-binding site is contributed by tyrosine 18. Catalysis depends on histidine 23, which acts as the Proton acceptor. Positions 69, 71, and 117 each coordinate tRNA.

This sequence belongs to the PTH family. Monomer.

It localises to the cytoplasm. The catalysed reaction is an N-acyl-L-alpha-aminoacyl-tRNA + H2O = an N-acyl-L-amino acid + a tRNA + H(+). Functionally, hydrolyzes ribosome-free peptidyl-tRNAs (with 1 or more amino acids incorporated), which drop off the ribosome during protein synthesis, or as a result of ribosome stalling. In terms of biological role, catalyzes the release of premature peptidyl moieties from peptidyl-tRNA molecules trapped in stalled 50S ribosomal subunits, and thus maintains levels of free tRNAs and 50S ribosomes. This chain is Peptidyl-tRNA hydrolase, found in Idiomarina loihiensis (strain ATCC BAA-735 / DSM 15497 / L2-TR).